The following is a 365-amino-acid chain: Probable L-tyrosine/L-aspartate decarboxylase (365 aa).

Lysine 225 is subject to N6-(pyridoxal phosphate)lysine.

This sequence belongs to the group II decarboxylase family. MfnA subfamily. Pyridoxal 5'-phosphate serves as cofactor.

It carries out the reaction L-tyrosine + H(+) = tyramine + CO2. It catalyses the reaction L-aspartate + H(+) = beta-alanine + CO2. It functions in the pathway cofactor biosynthesis; methanofuran biosynthesis. Its pathway is cofactor biosynthesis; coenzyme A biosynthesis. Functionally, catalyzes the decarboxylation of L-tyrosine to produce tyramine for methanofuran biosynthesis. Can also catalyze the decarboxylation of L-aspartate to produce beta-alanine for coenzyme A (CoA) biosynthesis. This is Probable L-tyrosine/L-aspartate decarboxylase from Methanocorpusculum labreanum (strain ATCC 43576 / DSM 4855 / Z).